Consider the following 514-residue polypeptide: MNIQEEIKKRRTFAIISHPDAGKTTITEQLLYFGGEIREAGTVKGKKTGTFAKSDWMDIEKQRGISVTSSVMQFDYDGKRVNILDTPGHEDFSEDTYRTLMAVDAAVMVVDSAKGIEAQTKKLFEVVKHRGIPVFTFMNKLDRDGREPLDLLQELEEILGIASYPMNWPIGMGKAFEGLYDLYNQRLELYKGDERFASLEDGDKLFGSNPFYEQVKDDIELLNEAGNEFSEEAILAGELTPVFFGSALTNFGVQTFLETFLKFAPEPHGHKKTDGEIVDPYDKDFSGFVFKIQANMDPRHRDRIAFVRIVSGEFERGMSVNLPRTGKGAKLSNVTQFMAESRENVTNAVAGDIIGVYDTGTYQVGDTLTVGKNKFEFEPLPTFTPEIFMKVSAKNVMKQKSFHKGIEQLVQEGAVQLYKNYQTSEYMLGAVGQLQFEVFKHRMEGEYNAEVVMSPMGKKTVRWIKPEDLDERMSSSRNILAKDRFDQPVFLFENDFALRWFADKYPDVELEEKM.

The tr-type G domain maps to 8–268 (KKRRTFAIIS…TFLKFAPEPH (261 aa)). GTP is bound by residues 17-24 (SHPDAGKT), 85-89 (DTPGH), and 139-142 (NKLD).

Belongs to the TRAFAC class translation factor GTPase superfamily. Classic translation factor GTPase family. PrfC subfamily.

Its subcellular location is the cytoplasm. Increases the formation of ribosomal termination complexes and stimulates activities of RF-1 and RF-2. It binds guanine nucleotides and has strong preference for UGA stop codons. It may interact directly with the ribosome. The stimulation of RF-1 and RF-2 is significantly reduced by GTP and GDP, but not by GMP. The chain is Peptide chain release factor 3 from Streptococcus pneumoniae (strain Hungary19A-6).